A 508-amino-acid chain; its full sequence is MSQEKYIMAIDQGTTSSRAIIFNQKGEKVSSSQKEFPQIFPHAGWVEHNANQIWNSVQSVIAGAFIESSIKPSQIEAIGITNQRETTVVWDKKTGVPIYNAIVWQSRQTAPIAEQLKEDGHTKMIHEKTGLVIDAYFSATKIRWILDHVPGAQERAEKGELLFGTIDTWLVWKLTDGAVHVTDYSNAARTMLYNIKDLTWDDEILELLNIPKDMLPEVKSNSEIYGKTAAFHFYGGEVPISGMAGDQQAALFGQLAFEPGMVKNTYGTGSFIIMNTGDEMQLSSNNLLTTIGYGIGGKVHYALEGSIFIAGSAIQWLRDGLKMIETSPESEQFALASTSDDEVYVVPAFTGLGAPYWDSNARGSVFGLTRGTSKEDFVKATLQSIAYQVRDVIDTMQVDSGIDIQQLRVDGGAAMNNMLMQFQADILGIDIARAKNLETTALGAAFLAGLAVGYWEDMDALKELNATGQLFKASMNESRKEKLYKGWKRAVKATQVFTQEEDADDDAK.

Residue Thr-14 coordinates ADP. ATP contacts are provided by Thr-14, Thr-15, and Ser-16. Thr-14 is a binding site for sn-glycerol 3-phosphate. Arg-18 contributes to the ADP binding site. 3 residues coordinate sn-glycerol 3-phosphate: Arg-84, Glu-85, and Tyr-136. Residues Arg-84, Glu-85, and Tyr-136 each coordinate glycerol. His-232 is subject to Phosphohistidine; by HPr. Asp-246 provides a ligand contact to sn-glycerol 3-phosphate. Asp-246 and Gln-247 together coordinate glycerol. ADP-binding residues include Thr-268 and Gly-311. Residues Thr-268, Gly-311, Gln-315, and Gly-412 each coordinate ATP. ADP is bound by residues Gly-412 and Asn-416.

Belongs to the FGGY kinase family. Homotetramer and homodimer (in equilibrium). Post-translationally, the phosphoenolpyruvate-dependent sugar phosphotransferase system (PTS), including enzyme I, and histidine-containing protein (HPr) are required for the phosphorylation, which leads to the activation of the enzyme.

It catalyses the reaction glycerol + ATP = sn-glycerol 3-phosphate + ADP + H(+). Its pathway is polyol metabolism; glycerol degradation via glycerol kinase pathway; sn-glycerol 3-phosphate from glycerol: step 1/1. Its activity is regulated as follows. Activated by phosphorylation and inhibited by fructose 1,6-bisphosphate (FBP). Functionally, key enzyme in the regulation of glycerol uptake and metabolism. Catalyzes the phosphorylation of glycerol to yield sn-glycerol 3-phosphate. The chain is Glycerol kinase from Streptococcus pyogenes serotype M4 (strain MGAS10750).